A 215-amino-acid chain; its full sequence is uncharacterized protein (215 aa).

This is an uncharacterized protein from Acanthamoeba polyphaga (Amoeba).